The sequence spans 512 residues: Protein OS-9 homolog (512 aa).

Residues 1–17 (MRRFNLILLASLQLVGA) form the signal peptide. The disordered stretch occupies residues 71 to 91 (QAREADARDNEAENKDQDGPS). Over residues 73 to 88 (READARDNEAENKDQD) the composition is skewed to basic and acidic residues. Residue Asn118 is glycosylated (N-linked (GlcNAc...) asparagine). Residues 149–288 (DSCLYFMSGW…VVNTPRLCND (140 aa)) form the MRH domain. Cys151 and Cys164 are disulfide-bonded. Positions 158, 159, 171, 242, 248, 270, and 276 each coordinate a mannooligosaccharide derivative. Intrachain disulfides connect Cys241–Cys274 and Cys256–Cys286. 2 disordered regions span residues 329–349 (QVPL…PRDV) and 485–512 (AAAK…KDEL). A compositionally biased stretch (acidic residues) spans 492–504 (DDEEEVVEGSEEQ). Residues 509–512 (KDEL) carry the Prevents secretion from ER motif.

This sequence belongs to the OS-9 family. As to quaternary structure, interacts with missfolded ER lumenal proteins.

Its subcellular location is the endoplasmic reticulum membrane. Functionally, lectin involved in the quality control of the secretory pathway. As a member of the endoplasmic reticulum-associated degradation lumenal (ERAD-L) surveillance system, targets misfolded endoplasmic reticulum lumenal glycoproteins for degradation. The polypeptide is Protein OS-9 homolog (YOS1) (Gibberella zeae (strain ATCC MYA-4620 / CBS 123657 / FGSC 9075 / NRRL 31084 / PH-1) (Wheat head blight fungus)).